Consider the following 485-residue polypeptide: Noelin (485 aa).

The N-terminal stretch at 1-24 (MSVPLLKIGVVLSTMAMITNWMSQ) is a signal peptide. N-linked (GlcNAc...) asparagine glycans are attached at residues asparagine 33, asparagine 103, asparagine 187, asparagine 288, asparagine 307, asparagine 394, asparagine 431, and asparagine 473. Residues 87–225 (RDARTKQLRQ…ERLRACMQKL (139 aa)) adopt a coiled-coil conformation. Residues 226–478 (ACGKLTGISD…QTLYNVTLFH (253 aa)) enclose the Olfactomedin-like domain. The cysteines at positions 227 and 409 are disulfide-linked.

In terms of assembly, homotetramer; disulfide-linked. Dimer of dimers, giving rise to a V-shaped homotretramer. Isoform 1 and isoform 3 interact with RTN4R. Identified in a complex with RTN4R and LINGO1. Peripherally associated with AMPAR complex. AMPAR complex consists of an inner core made of 4 pore-forming GluA/GRIA proteins (GRIA1, GRIA2, GRIA3 and GRIA4) and 4 major auxiliary subunits arranged in a twofold symmetry. One of the two pairs of distinct binding sites is occupied either by CNIH2, CNIH3 or CACNG2, CACNG3. The other harbors CACNG2, CACNG3, CACNG4, CACNG8 or GSG1L. This inner core of AMPAR complex is complemented by outer core constituents binding directly to the GluA/GRIA proteins at sites distinct from the interaction sites of the inner core constituents. Outer core constituents include at least PRRT1, PRRT2, CKAMP44/SHISA9, FRRS1L and NRN1. The proteins of the inner and outer core serve as a platform for other, more peripherally associated AMPAR constituents, including OLFM1. Alone or in combination, these auxiliary subunits control the gating and pharmacology of the AMPAR complex and profoundly impact their biogenesis and protein processing. Interacts with OLFM2. In isoform 3 and isoform 4, the signal peptide is predicted to end in position 17. In terms of tissue distribution, expressed in the brain (at protein level). Expressed in the brain, predominantly in the cortex and hippocampus. In the pituitary only the two A-type and in the adrenal glands only the two B-type forms were detected.

The protein resides in the secreted. The protein localises to the synapse. It localises to the endoplasmic reticulum. It is found in the cell projection. Its subcellular location is the axon. The protein resides in the perikaryon. Contributes to the regulation of axonal growth in the embryonic and adult central nervous system by inhibiting interactions between RTN4R and LINGO1. Inhibits RTN4R-mediated axon growth cone collapse. May play an important role in regulating the production of neural crest cells by the neural tube. May be required for normal responses to olfactory stimuli. The sequence is that of Noelin (Olfm1) from Rattus norvegicus (Rat).